A 621-amino-acid polypeptide reads, in one-letter code: Cystathionine gamma-synthase (621 aa).

Residue Lys-429 is modified to N6-(pyridoxal phosphate)lysine.

This sequence belongs to the trans-sulfuration enzymes family. MET7 subfamily. Both met-3 and met-7 are required to form a functional cystathionine gamma-synthase. The cofactor is pyridoxal 5'-phosphate.

It catalyses the reaction O-succinyl-L-homoserine + L-cysteine = L,L-cystathionine + succinate + H(+). It participates in amino-acid biosynthesis; L-methionine biosynthesis via de novo pathway; L-cystathionine from O-succinyl-L-homoserine: step 1/1. In terms of biological role, catalyzes the formation of L-cystathionine from O-succinyl-L-homoserine (OSHS) and L-cysteine, via a gamma-replacement reaction. In the absence of thiol, catalyzes gamma-elimination to form 2-oxobutanoate, succinate and ammonia. The polypeptide is Cystathionine gamma-synthase (met-7) (Neurospora crassa (strain ATCC 24698 / 74-OR23-1A / CBS 708.71 / DSM 1257 / FGSC 987)).